Here is a 1912-residue protein sequence, read N- to C-terminus: Protein javelin (1912 aa).

Disordered stretches follow at residues 1–32, 89–145, 298–377, 460–515, 545–586, 764–920, 965–1010, 1257–1297, 1486–1507, and 1881–1912; these read MGNG…QHNY, GTGL…VGGA, RSRH…HRLS, QSRR…SLSE, TTRT…TLRQ, SYNQ…EAPV, IQEN…GKPL, GINS…GGAA, EQQE…QYED, and YDPS…DDKM. Basic residues-rich tracts occupy residues 97–133 and 299–313; these read QQLH…HPHA and SRHK…KKPP. Residues 339–354 are compositionally biased toward polar residues; the sequence is ADDTQSQRSNSATCDS. The segment covering 355–374 has biased composition (low complexity); that stretch reads HQQQQQQQHQPQQQHQQQQH. The span at 489-498 shows a compositional bias: polar residues; sequence EHSQSSVFPE. A compositionally biased stretch (low complexity) spans 499 to 512; sequence TTTSNSDDQTDSPS. Acidic residues predominate over residues 553–566; it reads SEEGEEEQTGEEVV. A compositionally biased stretch (polar residues) spans 568 to 586; it reads SLTTPTEPQTSDSESTLRQ. Basic and acidic residues-rich tracts occupy residues 772 to 792 and 802 to 869; these read QRKE…DSIR and RQRE…RKEE. Over residues 890–904 the composition is skewed to acidic residues; the sequence is SQQEDTVADVEEEDN. The span at 965-979 shows a compositional bias: basic and acidic residues; that stretch reads IQENKETSQRIEPKP. A compositionally biased stretch (low complexity) spans 981 to 990; it reads PKTNSNSSST. 2 stretches are compositionally biased toward acidic residues: residues 1494-1507 and 1903-1912; these read LEEE…QYED and ELYDSLDDKM.

Its subcellular location is the cytoplasm. The protein resides in the cytoskeleton. Its function is as follows. Important for normal assembly of actin bundles during bristle formation. This Drosophila melanogaster (Fruit fly) protein is Protein javelin.